A 260-amino-acid polypeptide reads, in one-letter code: Beta-lactamase SHV-6 (260 aa).

The N-terminal stretch at 1–11 is a signal peptide; sequence LLATLPLAVHA. The active-site Acyl-ester intermediate is the Ser56. A disulfide bridge connects residues Cys63 and Cys109. The active-site Proton acceptor is Glu154. Substrate is bound at residue 220-222; sequence KTG.

Belongs to the class-A beta-lactamase family.

It carries out the reaction a beta-lactam + H2O = a substituted beta-amino acid. SHV enzymes hydrolyze broad spectrum cephalosporins notably cefotaxime and ceftazidime. The chain is Beta-lactamase SHV-6 (bla) from Klebsiella pneumoniae.